We begin with the raw amino-acid sequence, 485 residues long: Choline/ethanolamine transporter flvcr2b (485 aa).

The Cytoplasmic portion of the chain corresponds to 1–46 (MDTRFNDINRVKMGDESKSVDGEVNDNTYYSKTDAEVNFEHRYTTP). A helical membrane pass occupies residues 47 to 71 (ETRLYKKRWVIVCLFSSYSLCNSYQ). Residues Asn-68 and Trp-72 each contribute to the choline site. Residues 72–89 (WIQYGIINNIFMRFYGVD) are Extracellular-facing. Residues 90–117 (SFTIDWMSMIYMLTYIPLIFPVSWLLDK) form a helical membrane-spanning segment. The Cytoplasmic portion of the chain corresponds to 118 to 119 (KG). The chain crosses the membrane as a helical span at residues 120-139 (LRVIALVAAALNCAGTWIKV). Residues 140-146 (ASARPDL) are Extracellular-facing. A helical transmembrane segment spans residues 147-175 (FPVTFLGQFTCSVAQVFILGMPSRIASVW). Choline contacts are provided by Gln-161 and Leu-165. Topologically, residues 176 to 180 (FGSDE) are cytoplasmic. A helical membrane pass occupies residues 181–206 (VSTACSIGVFGNQLGIAIGFLVPPIL). Topologically, residues 207–211 (VPNVD) are extracellular. A helical transmembrane segment spans residues 212–241 (DLDELAAHIRVMFYITAGVATFLFVLVVIV). Topologically, residues 242–277 (FQERPEIPPTLAQAAARRISPESYSYTASILRLLRN) are cytoplasmic. A helical transmembrane segment spans residues 278-308 (KAFILLVITYGLNVGCFYAVSTLLNRMIIEH). A choline-binding site is contributed by Tyr-295. At 309–312 (YPGE) the chain is on the extracellular side. A helical membrane pass occupies residues 313 to 341 (EVNAGRIGLTIVVAGMVGSLICGIWLDRS). Over 342–343 (KT) the chain is Cytoplasmic. The helical transmembrane segment at 344-366 (YKQTTLAVYLMSLMGLVIYAFTL) threads the bilayer. Over 367 to 369 (DLH) the chain is Extracellular. Residues 370–399 (HLWVVFITAGALGFFMTGYLPLGFEFAVEL) form a helical membrane-spanning segment. Residues 400–407 (TYPESEGT) are Cytoplasmic-facing. A helical membrane pass occupies residues 408-433 (SSGLLNCSAQVFGIIFTICQGKIMDS). Gln-417 is a binding site for choline. The Extracellular segment spans residues 434–435 (FG). Residues 436–458 (TLAGNLFLCAFLLIGTIITGCIK) traverse the membrane as a helical segment. The Cytoplasmic segment spans residues 459–485 (SDLRRQLANQQAQTADHLDTSPTQTRF).

It belongs to the major facilitator superfamily. Feline leukemia virus subgroup C receptor (TC 2.A.1.28.1) family.

It is found in the cell membrane. It localises to the mitochondrion membrane. Its subcellular location is the endoplasmic reticulum membrane. The catalysed reaction is choline(out) = choline(in). The enzyme catalyses ethanolamine(in) = ethanolamine(out). It catalyses the reaction heme b(in) = heme b(out). Functionally, choline uniporter that specifically mediates choline uptake at the blood-brain-barrier. Responsible for the majority of choline uptake across the blood-brain-barrier from the circulation into the brain. Choline, a nutrient critical for brain development, is a precursor of phosphatidylcholine, as well as betaine. Also mediates transport of ethanolamine. Choline and ethanolamine transport is not coupled with proton transport and is exclusively driven by the choline gradient across the plasma membrane. Also acts as a heme b transporter. In Danio rerio (Zebrafish), this protein is Choline/ethanolamine transporter flvcr2b.